A 1243-amino-acid polypeptide reads, in one-letter code: Membrane-associated phosphatidylinositol transfer protein 1 (1243 aa).

A phosphothreonine mark is found at threonine 59, threonine 282, and threonine 287. A disordered region spans residues cysteine 259–leucine 330. Polar residues predominate over residues proline 271–serine 283. Over residues alanine 299–serine 319 the composition is skewed to low complexity. Residues serine 300, serine 304, serine 319, serine 326, serine 329, serine 342, serine 345, serine 346, and serine 373 each carry the phosphoserine modification. Phosphoserine; by CDK1 is present on serine 382. A compositionally biased stretch (low complexity) spans alanine 581–serine 593. Residues alanine 581–proline 679 are disordered. Residues serine 593, serine 600, and serine 621 each carry the phosphoserine modification. A compositionally biased stretch (polar residues) spans glycine 643–glycine 658. Residues arginine 684–isoleucine 878 enclose the DDHD domain. At serine 895 the chain carries Phosphoserine. The interval leucine 1206–glutamate 1243 is disordered. Residues arginine 1210 and arginine 1217 each carry the omega-N-methylarginine modification. Serine 1236 is subject to Phosphoserine.

It belongs to the PtdIns transfer protein family. PI transfer class IIA subfamily. As to quaternary structure, interacts with PTK2B via its C-terminus. Interacts with RHOA. Has higher affinity for the inactive, GDP-bound form of RHOA. The CDK1-phosphorylated form interacts with PLK1. Interacts with VAPB and PIK4CA. In terms of processing, phosphorylated on multiple sites by CDK1 at the onset of mitosis. Phosphorylation facilitates dissociation from the Golgi complex and is required for interaction with PLK1. Phosphorylated on threonine residues upon treatment with oleic acid. Post-translationally, phosphorylated on tyrosine residues by PTK2B. Detected at high levels in brain, and at lower levels in lung, kidney, spleen and liver (at protein level). Ubiquitous. Highly expressed in embryonic retina and the central nervous system.

The protein resides in the cytoplasm. It localises to the golgi apparatus. The protein localises to the golgi stack membrane. It is found in the endoplasmic reticulum membrane. Its subcellular location is the lipid droplet. The protein resides in the cleavage furrow. It localises to the midbody. The enzyme catalyses a 1,2-diacyl-sn-glycero-3-phospho-(1D-myo-inositol)(in) = a 1,2-diacyl-sn-glycero-3-phospho-(1D-myo-inositol)(out). Its function is as follows. Catalyzes the transfer of phosphatidylinositol (PI) between membranes. Binds PI. Also binds phosphatidylcholine (PC) and phosphatidic acid (PA) with the binding affinity order of PI &gt; PA &gt; PC. Regulates RHOA activity, and plays a role in cytoskeleton remodeling. Necessary for normal completion of cytokinesis. Plays a role in maintaining normal diacylglycerol levels in the Golgi apparatus. Necessary for maintaining the normal structure of the endoplasmic reticulum and the Golgi apparatus. Required for protein export from the endoplasmic reticulum and the Golgi. Binds calcium ions. The polypeptide is Membrane-associated phosphatidylinositol transfer protein 1 (Pitpnm1) (Mus musculus (Mouse)).